Reading from the N-terminus, the 153-residue chain is Allergen Pet c 1 (153 aa).

It belongs to the BetVI family. In terms of assembly, may form dimers.

This Petroselinum crispum (Parsley) protein is Allergen Pet c 1.